Reading from the N-terminus, the 285-residue chain is Undecaprenyl-diphosphatase 2 (285 aa).

The next 8 helical transmembrane spans lie at 5–25 (MDLLHVFILAVIQGLAELLPV), 47–67 (MTFLLVMLHTGTMFAVIVYFW), 86–106 (WYVLLATAITGVLGLLLQSLI), 122–142 (LFSNSKLMAAALAAAGILIIL), 156–176 (LPSAMIIGAVQALCLPFRGFS), 198–218 (FSFALAVVLTPAVIVKELVRL), 235–255 (SLLLPSIFGMVFSFLTGLLAL), and 265–285 (GRWYLFGIYCLAFSGVVLTLA).

The protein belongs to the UppP family.

The protein resides in the cell inner membrane. The enzyme catalyses di-trans,octa-cis-undecaprenyl diphosphate + H2O = di-trans,octa-cis-undecaprenyl phosphate + phosphate + H(+). Its function is as follows. Catalyzes the dephosphorylation of undecaprenyl diphosphate (UPP). Confers resistance to bacitracin. The polypeptide is Undecaprenyl-diphosphatase 2 (Acinetobacter baylyi (strain ATCC 33305 / BD413 / ADP1)).